The sequence spans 499 residues: Pleckstrin homology domain-containing family O member 2 (499 aa).

A compositionally biased stretch (basic and acidic residues) spans 1 to 11 (MEEEGVKEGGQ). The segment at 1 to 21 (MEEEGVKEGGQRPRSAQTADK) is disordered. The region spanning 18–119 (TADKAGWIKK…WIKALNEGIN (102 aa)) is the PH domain. A Phosphoserine modification is found at serine 167. Residues 170 to 419 (LSRLDLDVPD…RRRQPGEQLH (250 aa)) are disordered. Residues 201-212 (RPPMPPAKPSPA) are compositionally biased toward pro residues. Over residues 229–238 (SAPAPVPASS) the composition is skewed to low complexity. Serine 237 and serine 238 each carry phosphoserine. The span at 246–258 (EDLETPVVEDSDS) shows a compositional bias: acidic residues. Serine 273 is modified (phosphoserine). Threonine 298 and threonine 311 each carry phosphothreonine. Composition is skewed to low complexity over residues 329–349 (EASG…GPAE) and 367–386 (AAGP…TLPP). Residue serine 399 is modified to Phosphoserine. A coiled-coil region spans residues 416 to 492 (EQLHRAQLEV…LREKRRELVT (77 aa)).

This chain is Pleckstrin homology domain-containing family O member 2 (PLEKHO2), found in Bos taurus (Bovine).